The primary structure comprises 378 residues: MKNFILLAVSSILLVDLFPTHCGHNVDLSKAINLNGVNFNNVDASSLGAAHVGQSASRGRGLGENPDDEEGDAKKKKDGKKAEPKNPRENKLKQPGDRADGQPAGDRADGQPAGDRADGQPAGDRAAGQPAGDRADGQPAGDRADGQPAGDRADGQPAGDRADGQPAGDRAAGQPAGDRAAGQPAGDRADGQPAGDRAAGQPAGDRADGQPAGDRAAGQPAGDRADGQPAGDRAAGQPAGDRAAGQPAGDRAAGQPAGDRAAGQPAGNGAGGQAAGGNAGGGQGQNNEGANAPNEKSVKEYLDKVRATVGTEWTPCSVTCGVGVRVRRRVNAANKKPEDLTLNDLETDVCTMDKCAGIFNVVSNSLGLVILLVLALFN.

The first 22 residues, 1–22, serve as a signal peptide directing secretion; it reads MKNFILLAVSSILLVDLFPTHC. Residues 51 to 295 form a disordered region; sequence HVGQSASRGR…NNEGANAPNE (245 aa). Over residues 72–100 the composition is skewed to basic and acidic residues; sequence DAKKKKDGKKAEPKNPRENKLKQPGDRAD. Residues 80 to 88 form a required for the binding to heparan sulfate proteoglycans (HSPGs) on the surface of host hepatocytes region; the sequence is KKAEPKNPR. The region I; contains the proteolytic cleavage site stretch occupies residues 91–95; that stretch reads KLKQP. 19 repeat units span residues 95–103, 104–112, 113–121, 122–130, 131–139, 140–148, 149–157, 158–166, 167–175, 176–184, 185–193, 194–202, 203–211, 212–220, 221–229, 230–238, 239–247, 248–256, and 257–265. The interval 95–265 is 19 X 9 AA tandem repeats of [PA]-G-D-R-A-[DA]-G-Q-P; that stretch reads PGDRADGQPA…PAGDRAAGQP (171 aa). Positions 266-284 are enriched in gly residues; it reads AGNGAGGQAAGGNAGGGQG. Residues 285 to 295 are compositionally biased toward low complexity; sequence QNNEGANAPNE. The TSP type-1 domain maps to 304–356; it reads KVRATVGTEWTPCSVTCGVGVRVRRRVNAANKKPEDLTLNDLETDVCTMDKCA. Cystine bridges form between Cys-316–Cys-350 and Cys-320–Cys-355. Residue Thr-319 is glycosylated (O-linked (Fuc) threonine). Cys-355 carries the GPI-anchor amidated cysteine lipid modification. A propeptide spans 356-378 (removed in mature form); it reads AGIFNVVSNSLGLVILLVLALFN.

The protein belongs to the plasmodium circumsporozoite protein family. During host cell invasion, proteolytically cleaved at the cell membrane in the region I by a papain-like cysteine protease of parasite origin. Cleavage is triggered by the sporozoite contact with highly sulfated heparan sulfate proteoglycans (HSPGs) present on the host hepatocyte cell surface. Cleavage exposes the TSP type-1 (TSR) domain and is required for productive invasion of host hepatocytes but not for adhesion to the host cell membrane. Cleavage is dispensable for sporozoite development in the oocyst, motility and for traversal of host and vector cells. Post-translationally, O-glycosylated; maybe by POFUT2.

Its subcellular location is the cell membrane. The protein resides in the cytoplasm. Its function is as follows. Essential sporozoite protein. In the mosquito vector, required for sporozoite development in the oocyst, migration through the vector hemolymph and entry into the vector salivary glands. In the vertebrate host, required for sporozoite migration through the host dermis and infection of host hepatocytes. Binds to highly sulfated heparan sulfate proteoglycans (HSPGs) on the surface of host hepatocytes. In the vertebrate host, binds to highly sulfated heparan sulfate proteoglycans (HSPGs) on the surface of host hepatocytes and is required for sporozoite invasion of the host hepatocytes. This chain is Circumsporozoite protein, found in Plasmodium vivax (strain Belem).